Here is a 555-residue protein sequence, read N- to C-terminus: Vacuolar fusion protein MON1 homolog A (555 aa).

Residues 1–12 (MAADMQRKRSSE) are compositionally biased toward basic and acidic residues. The interval 1–87 (MAADMQRKRS…RGPPPLPADM (87 aa)) is disordered. 2 positions are modified to phosphoserine: Ser31 and Ser56. At Thr61 the chain carries Phosphothreonine. Ser91 carries the phosphoserine modification. The tract at residues 114–147 (PGSSEDWLDPPGAVGRPATEPPREGTAEGDEEDA) is disordered.

Belongs to the MON1/SAND family. Interacts with CCZ1. Found in a complex with RMC1, CCZ1, MON1A and MON1B. The MON1A-CCZ1B complex interacts with RIMOC1. The MON1A-CCZ1B complex interacts with RAB7A and this interaction is enhanced in the presence of RIMOC1.

In terms of biological role, plays an important role in membrane trafficking through the secretory apparatus. Not involved in endocytic trafficking to lysosomes. Acts in concert with CCZ1, as a guanine exchange factor (GEF) for RAB7, promotes the exchange of GDP to GTP, converting it from an inactive GDP-bound form into an active GTP-bound form. The sequence is that of Vacuolar fusion protein MON1 homolog A (MON1A) from Macaca fascicularis (Crab-eating macaque).